We begin with the raw amino-acid sequence, 115 residues long: Small ribosomal subunit protein uS13 (115 aa).

Residues 92 to 115 (RRGLPVRGQNTKNNARTRKGSKRK) form a disordered region. Residues 106-115 (ARTRKGSKRK) are compositionally biased toward basic residues.

The protein belongs to the universal ribosomal protein uS13 family. In terms of assembly, part of the 30S ribosomal subunit. Forms a loose heterodimer with protein S19. Forms two bridges to the 50S subunit in the 70S ribosome.

In terms of biological role, located at the top of the head of the 30S subunit, it contacts several helices of the 16S rRNA. In the 70S ribosome it contacts the 23S rRNA (bridge B1a) and protein L5 of the 50S subunit (bridge B1b), connecting the 2 subunits; these bridges are implicated in subunit movement. Contacts the tRNAs in the A and P-sites. This is Small ribosomal subunit protein uS13 from Lactobacillus gasseri (strain ATCC 33323 / DSM 20243 / BCRC 14619 / CIP 102991 / JCM 1131 / KCTC 3163 / NCIMB 11718 / NCTC 13722 / AM63).